Reading from the N-terminus, the 492-residue chain is Auxin transporter-like protein 1 (492 aa).

At 1-67 (MVPREQAEEA…DAWFSCASNQ (67 aa)) the chain is on the cytoplasmic side. The chain crosses the membrane as a helical span at residues 68–85 (VAQVLLTLPYSFSQLGML). Residues 86-87 (SG) lie on the Extracellular side of the membrane. The helical transmembrane segment at 88–108 (VLLQLFYGFMGSWTAYLISVL) threads the bilayer. Over 109–143 (YVEYRSRKEKEGVSFKNHVIQWFEVLDGLLGPYWK) the chain is Cytoplasmic. The helical transmembrane segment at 144–164 (AAGLAFNCTFLLFGSVIQLIA) threads the bilayer. Residues 165–180 (CASNIYYINDRLDKRT) are Extracellular-facing. Residues 181 to 201 (WTYIFGACCATTVFIPSFHNY) traverse the membrane as a helical segment. Residue Arg-202 is a topological domain, cytoplasmic. A helical transmembrane segment spans residues 203 to 223 (IWSFLGLGMTTYTAWYLAIAA). Residues 224–240 (LLNGQAEGITHTGPTKL) are Extracellular-facing. Residues 241–261 (VLYFTGATNILYTFGGHAVTV) form a helical membrane-spanning segment. Residues 262 to 274 (EIMHAMWKPAKFK) are Cytoplasmic-facing. A helical transmembrane segment spans residues 275–295 (YIYLLATLYVFTLTLPSASAM). Topologically, residues 296–322 (YWAFGDELLTHSNAFSLLPKTGWRDAA) are extracellular. Residues 323–343 (VILMLIHQFITFGFACTPLYF) traverse the membrane as a helical segment. Residues 344-364 (VWEKVIGMHDTKSICLRALAR) lie on the Cytoplasmic side of the membrane. A helical transmembrane segment spans residues 365-385 (LPIVVPIWFLAIIFPFFGPIN). Position 386 (Ser-386) is a topological domain, extracellular. Residues 387-407 (AVGALLVSFTVYIIPALAHIL) traverse the membrane as a helical segment. At 408–432 (TYRTASARMNAAEKPPFFLPSWTGM) the chain is on the cytoplasmic side. A helical transmembrane segment spans residues 433 to 453 (FVLNMFIVVWVLVVGFGLGGW). Topologically, residues 454-492 (ASMVNFIRQIDTFGLFAKCYQCPKPAPALAQSPVPLPHH) are extracellular.

Belongs to the amino acid/polyamine transporter 2 family. Amino acid/auxin permease (AAAP) (TC 2.A.18.1) subfamily.

The protein resides in the cell membrane. Functionally, carrier protein involved in proton-driven auxin influx. May mediate the formation of auxin gradient from developing leaves (site of auxin biosynthesis) to tips. This chain is Auxin transporter-like protein 1, found in Oryza sativa subsp. japonica (Rice).